The chain runs to 330 residues: Protein ANTHESIS POMOTING FACTOR 1 (330 aa).

WD repeat units lie at residues 22-61 (DFGG…QLKI), 112-151 (GHKD…CQGI), 153-191 (HLRG…KGPF), 198-237 (GDTA…KKCG), 242-281 (PSQG…EVAR), and 284-323 (NNIG…APAD).

This sequence belongs to the WD repeat SWD2 family. As to expression, expressed in the shoot apical meristem (SAM), embryos, seedlings, cotyledons, leaves primordia, young leaves and roots.

It localises to the nucleus. Component of a chromatin regulatory complex involved in regulating chromatin structure in the nucleus. Promotes flowering under long days (LD) via the regulation of bolting. The sequence is that of Protein ANTHESIS POMOTING FACTOR 1 from Arabidopsis thaliana (Mouse-ear cress).